The chain runs to 1017 residues: Multiple C2 domain and transmembrane region protein 14 (1017 aa).

One can recognise a C2 1 domain in the interval methionine 1–tyrosine 110. Positions alanine 139–proline 231 are disordered. Residues proline 141 to alanine 153 are compositionally biased toward low complexity. The segment covering threonine 154–aspartate 213 has biased composition (basic and acidic residues). The segment covering alanine 217 to proline 231 has biased composition (pro residues). 3 C2 domains span residues aspartate 258–tyrosine 387, aspartate 420–phenylalanine 554, and valine 587–tyrosine 714. Residues aspartate 296, asparagine 299, aspartate 352, threonine 355, and glutamate 359 each contribute to the Ca(2+) site. The next 2 membrane-spanning stretches (helical) occupy residues valine 851–isoleucine 871 and alanine 957–phenylalanine 977.

It belongs to the MCTP family. Ca(2+) serves as cofactor. As to expression, expressed in incipient leaf primordia and in roots meristems. Observed in flowers.

It is found in the membrane. It localises to the vesicle. Its subcellular location is the golgi apparatus membrane. Its function is as follows. May function as a signaling molecule by regulating the trafficking of other regulators. The sequence is that of Multiple C2 domain and transmembrane region protein 14 from Arabidopsis thaliana (Mouse-ear cress).